The primary structure comprises 198 residues: Small ribosomal subunit protein uS2 (198 aa).

The protein belongs to the universal ribosomal protein uS2 family.

The sequence is that of Small ribosomal subunit protein uS2 (rps2) from Methanothermobacter thermautotrophicus (strain ATCC 29096 / DSM 1053 / JCM 10044 / NBRC 100330 / Delta H) (Methanobacterium thermoautotrophicum).